The sequence spans 166 residues: Large ribosomal subunit protein uL10 (166 aa).

In terms of assembly, part of the ribosomal stalk of the 50S ribosomal subunit. The N-terminus interacts with L11 and 23S rRNA to form the base of the stalk. The C-terminus forms an elongated spine to which L12 dimers bind in a sequential fashion forming a pentameric L10(L12)2(L12)2 complex.

In terms of biological role, forms part of the ribosomal stalk, playing a central role in the interaction of the ribosome with GTP-bound translation factors (such as IF-2, EF-Tu, EF-G and RF3). The polypeptide is Large ribosomal subunit protein uL10 (rplJ) (Bacillus subtilis (strain 168)).